A 156-amino-acid chain; its full sequence is Small ribosomal subunit protein uS7 (156 aa).

It belongs to the universal ribosomal protein uS7 family. Part of the 30S ribosomal subunit. Contacts proteins S9 and S11.

Its function is as follows. One of the primary rRNA binding proteins, it binds directly to 16S rRNA where it nucleates assembly of the head domain of the 30S subunit. Is located at the subunit interface close to the decoding center, probably blocks exit of the E-site tRNA. The protein is Small ribosomal subunit protein uS7 of Streptococcus pneumoniae serotype 4 (strain ATCC BAA-334 / TIGR4).